The primary structure comprises 105 residues: Class II hydrophobin 1 (105 aa).

The N-terminal stretch at 1–15 is a signal peptide; it reads MQVLLIATLVASVLA. 4 cysteine pairs are disulfide-bonded: Cys38/Cys87, Cys48/Cys78, Cys49/Cys58, and Cys88/Cys99.

The protein belongs to the cerato-ulmin hydrophobin family. As to quaternary structure, homotetramer. Further self-assembles to form highly ordered films at water-air interfaces through intermolecular interactions.

The protein resides in the secreted. It localises to the cell wall. Functionally, aerial growth, conidiation, and dispersal of filamentous fungi in the environment rely upon a capability of their secreting small amphipathic proteins called hydrophobins (HPBs) with low sequence identity. Class I can self-assemble into an outermost layer of rodlet bundles on aerial cell surfaces, conferring cellular hydrophobicity that supports fungal growth, development and dispersal; whereas Class II form highly ordered films at water-air interfaces through intermolecular interactions but contribute nothing to the rodlet structure. HYD1 is a class II hydrophobin that plays roles in conidiation and cuticle-bypassing infection by regulating the transcripts of frequency clock protein frq, and velvet protein vosA, as well as primordium formation via the mitogen-activated protein kinase signaling pathway. Also participates in stress response, including tolerance of mycelia to osmotic and oxidative stresses, and conidia to high or low temperature. Acts as a defensive factor against Calcarisporium cordycipiticola infection, probably via the formation of a physical barrier to inhibit the pathogen infection owing to its hydrophobicity or binding to the effector of C.cordycipiticola, hindering the recognition of the pathogen. Finally, regulates the transcription of the AreA transcription factor at different developmental stages via a positive feedback loop. This chain is Class II hydrophobin 1, found in Cordyceps militaris (Caterpillar fungus).